The sequence spans 103 residues: Histone H4.2 (103 aa).

The span at 1 to 14 shows a compositional bias: gly residues; that stretch reads MTGRGKGGKGLGKG. The interval 1–20 is disordered; it reads MTGRGKGGKGLGKGGAKRHR. Lys6 is modified (N6-acetyl-N6-methyllysine; alternate). An N6-methyllysine; alternate mark is found at Lys6, Lys9, and Lys13. Lys13 carries the post-translational modification N6-acetyl-N6-methyllysine; alternate. Residues 17-21 mediate DNA binding; the sequence is KRHRK. Lys92 bears the N6-glutaryllysine mark.

The protein belongs to the histone H4 family. As to quaternary structure, the nucleosome is a histone octamer containing two molecules each of H2A, H2B, H3 and H4 assembled in one H3-H4 heterotetramer and two H2A-H2B heterodimers. The octamer wraps approximately 147 bp of DNA. Post-translationally, glutarylation at Lys-92 (H4K91glu) destabilizes nucleosomes by promoting dissociation of the H2A-H2B dimers from nucleosomes.

The protein resides in the nucleus. It is found in the chromosome. Its function is as follows. Core component of nucleosome. Nucleosomes wrap and compact DNA into chromatin, limiting DNA accessibility to the cellular machineries which require DNA as a template. Histones thereby play a central role in transcription regulation, DNA repair, DNA replication and chromosomal stability. DNA accessibility is regulated via a complex set of post-translational modifications of histones, also called histone code, and nucleosome remodeling. In Talaromyces funiculosus (Fruitlet core rot fungus), this protein is Histone H4.2 (H4.2).